Reading from the N-terminus, the 206-residue chain is uncharacterized protein (206 aa).

Disordered regions lie at residues 64 to 123 and 155 to 206; these read NTES…DPSL and VTTP…SSGG. Polar residues predominate over residues 66-79; the sequence is ESTQKTATTQQQGL. The span at 97–107 shows a compositional bias: low complexity; it reads AENNAQANQSE. Positions 108 to 118 are enriched in basic and acidic residues; that stretch reads NRAESTTKAES. The segment covering 155 to 167 has biased composition (low complexity); it reads VTTPTGQVVQPQT. Residues 182–198 show a composition bias toward polar residues; sequence GSMNSKPVSRGGFSSPN.

This is an uncharacterized protein from Haemophilus influenzae (strain ATCC 51907 / DSM 11121 / KW20 / Rd).